Consider the following 347-residue polypeptide: Lipoyl synthase (347 aa).

Residues cysteine 77, cysteine 82, cysteine 88, cysteine 103, cysteine 107, cysteine 110, and serine 317 each contribute to the [4Fe-4S] cluster site. The 218-residue stretch at 89-306 (FADGTATFMI…MDYGKKIGFF (218 aa)) folds into the Radical SAM core domain.

The protein belongs to the radical SAM superfamily. Lipoyl synthase family. [4Fe-4S] cluster is required as a cofactor.

It localises to the cytoplasm. It catalyses the reaction [[Fe-S] cluster scaffold protein carrying a second [4Fe-4S](2+) cluster] + N(6)-octanoyl-L-lysyl-[protein] + 2 oxidized [2Fe-2S]-[ferredoxin] + 2 S-adenosyl-L-methionine + 4 H(+) = [[Fe-S] cluster scaffold protein] + N(6)-[(R)-dihydrolipoyl]-L-lysyl-[protein] + 4 Fe(3+) + 2 hydrogen sulfide + 2 5'-deoxyadenosine + 2 L-methionine + 2 reduced [2Fe-2S]-[ferredoxin]. It functions in the pathway protein modification; protein lipoylation via endogenous pathway; protein N(6)-(lipoyl)lysine from octanoyl-[acyl-carrier-protein]: step 2/2. Its function is as follows. Catalyzes the radical-mediated insertion of two sulfur atoms into the C-6 and C-8 positions of the octanoyl moiety bound to the lipoyl domains of lipoate-dependent enzymes, thereby converting the octanoylated domains into lipoylated derivatives. In Psychrobacter cryohalolentis (strain ATCC BAA-1226 / DSM 17306 / VKM B-2378 / K5), this protein is Lipoyl synthase.